A 122-amino-acid polypeptide reads, in one-letter code: Serum amyloid A-1 protein (122 aa).

An N-terminal signal peptide occupies residues 1 to 19 (MKLLTSLVFCSLLLGVCHG). The important for amyloid formation stretch occupies residues 20–45 (GFFSFVHEAFQGAGDMWRAYTDMKEA). The segment covering 91–108 (HEDTIADQEANRHGRSGK) has biased composition (basic and acidic residues). Residues 91 to 122 (HEDTIADQEANRHGRSGKDPNYYRPPGLPDKY) form a disordered region.

It belongs to the SAA family. Homohexamer; dimer of trimers. Can form amyloid fibrils after partial proteolysis; the native, undenatured protein does not form amyloid fibrils (in vitro). Apolipoprotein of the HDL complex. Binds to heparin. As to expression, detected in blood plasma (at protein level). Detected in liver.

It localises to the secreted. Major acute phase protein. This is Serum amyloid A-1 protein (Saa1) from Mus musculus (Mouse).